Reading from the N-terminus, the 257-residue chain is Imidazole glycerol phosphate synthase subunit HisF (257 aa).

Residues Asp11 and Asp130 contribute to the active site.

The protein belongs to the HisA/HisF family. Heterodimer of HisH and HisF.

The protein resides in the cytoplasm. It carries out the reaction 5-[(5-phospho-1-deoxy-D-ribulos-1-ylimino)methylamino]-1-(5-phospho-beta-D-ribosyl)imidazole-4-carboxamide + L-glutamine = D-erythro-1-(imidazol-4-yl)glycerol 3-phosphate + 5-amino-1-(5-phospho-beta-D-ribosyl)imidazole-4-carboxamide + L-glutamate + H(+). The protein operates within amino-acid biosynthesis; L-histidine biosynthesis; L-histidine from 5-phospho-alpha-D-ribose 1-diphosphate: step 5/9. IGPS catalyzes the conversion of PRFAR and glutamine to IGP, AICAR and glutamate. The HisF subunit catalyzes the cyclization activity that produces IGP and AICAR from PRFAR using the ammonia provided by the HisH subunit. The chain is Imidazole glycerol phosphate synthase subunit HisF from Prochlorococcus marinus (strain MIT 9515).